Here is a 124-residue protein sequence, read N- to C-terminus: Small ribosomal subunit protein uS12 (124 aa).

3-methylthioaspartic acid is present on Asp-89. A disordered region spans residues Asp-103–Glu-124.

Belongs to the universal ribosomal protein uS12 family. In terms of assembly, part of the 30S ribosomal subunit. Contacts proteins S8 and S17. May interact with IF1 in the 30S initiation complex.

Its function is as follows. With S4 and S5 plays an important role in translational accuracy. In terms of biological role, interacts with and stabilizes bases of the 16S rRNA that are involved in tRNA selection in the A site and with the mRNA backbone. Located at the interface of the 30S and 50S subunits, it traverses the body of the 30S subunit contacting proteins on the other side and probably holding the rRNA structure together. The combined cluster of proteins S8, S12 and S17 appears to hold together the shoulder and platform of the 30S subunit. In Prochlorococcus marinus (strain NATL1A), this protein is Small ribosomal subunit protein uS12.